We begin with the raw amino-acid sequence, 303 residues long: Pantothenate synthetase (303 aa).

An ATP-binding site is contributed by 30–37; it reads MGYLHAGH. His-37 serves as the catalytic Proton donor. Position 61 (Gln-61) interacts with (R)-pantoate. Gln-61 contacts beta-alanine. ATP is bound at residue 147-150; that stretch reads GAKD. Gln-153 is a binding site for (R)-pantoate. Residues Val-176 and 184–187 each bind ATP; that span reads LSSR.

The protein belongs to the pantothenate synthetase family. In terms of assembly, homodimer.

It localises to the cytoplasm. It carries out the reaction (R)-pantoate + beta-alanine + ATP = (R)-pantothenate + AMP + diphosphate + H(+). Its pathway is cofactor biosynthesis; (R)-pantothenate biosynthesis; (R)-pantothenate from (R)-pantoate and beta-alanine: step 1/1. Functionally, catalyzes the condensation of pantoate with beta-alanine in an ATP-dependent reaction via a pantoyl-adenylate intermediate. The chain is Pantothenate synthetase from Rhizobium johnstonii (strain DSM 114642 / LMG 32736 / 3841) (Rhizobium leguminosarum bv. viciae).